We begin with the raw amino-acid sequence, 158 residues long: Protein FAM177B (158 aa).

A compositionally biased stretch (acidic residues) spans 36–48 (EYSTEEEEEEEKE). The segment at 36–59 (EYSTEEEEEEEKEEQSTNSTLDPS) is disordered.

It belongs to the FAM177 family.

The sequence is that of Protein FAM177B (FAM177B) from Homo sapiens (Human).